The chain runs to 314 residues: Ribosomal RNA small subunit methyltransferase H (314 aa).

S-adenosyl-L-methionine-binding positions include 36–38 (GGH), D56, F80, D102, and Q109.

Belongs to the methyltransferase superfamily. RsmH family.

Its subcellular location is the cytoplasm. It catalyses the reaction cytidine(1402) in 16S rRNA + S-adenosyl-L-methionine = N(4)-methylcytidine(1402) in 16S rRNA + S-adenosyl-L-homocysteine + H(+). Functionally, specifically methylates the N4 position of cytidine in position 1402 (C1402) of 16S rRNA. This chain is Ribosomal RNA small subunit methyltransferase H, found in Citrobacter koseri (strain ATCC BAA-895 / CDC 4225-83 / SGSC4696).